A 266-amino-acid polypeptide reads, in one-letter code: Putative carbamate hydrolase RutD (266 aa).

It belongs to the AB hydrolase superfamily. Hydrolase RutD family.

The catalysed reaction is carbamate + 2 H(+) = NH4(+) + CO2. Functionally, involved in pyrimidine catabolism. May facilitate the hydrolysis of carbamate, a reaction that can also occur spontaneously. This chain is Putative carbamate hydrolase RutD, found in Escherichia coli O111:H- (strain 11128 / EHEC).